The primary structure comprises 266 residues: MRKNTYAMRYVAGQPAERILPPGSFASIGQALPPGEPLSTEERIRILVWNIYKQQRAEWLSVLKNYGKDAHLVLLQEAQTTPELVQFATANYLAADQVPAFVLPQHPSGVMTLSAAHPVYCCPLREREPILRLAKSALVTVYPLPDTRLLMVVNIHAVNFSLGVDVYSKQLLPIGDQIAHHSGPVIMAGDFNAWSRRRMNALYRFAREMSLRQVRFTDDQRRRAFGRPLDFVFYRGLNVSEASVLVTRASDHNPLLVEFSPGKPDK.

This sequence belongs to the UPF0294 family.

The protein resides in the cytoplasm. The protein is UPF0294 protein YafD (yafD) of Escherichia coli O157:H7.